The sequence spans 210 residues: Large ribosomal subunit protein uL4 (210 aa).

Positions 41–79 are disordered; that stretch reads MANARQGTASTKTRAEVRGGGRKPWRQKGTGRARAGSNR. A compositionally biased stretch (polar residues) spans 43-52; sequence NARQGTASTK. Positions 60–71 are enriched in basic residues; it reads GGRKPWRQKGTG.

It belongs to the universal ribosomal protein uL4 family. Part of the 50S ribosomal subunit.

In terms of biological role, one of the primary rRNA binding proteins, this protein initially binds near the 5'-end of the 23S rRNA. It is important during the early stages of 50S assembly. It makes multiple contacts with different domains of the 23S rRNA in the assembled 50S subunit and ribosome. Its function is as follows. Forms part of the polypeptide exit tunnel. This chain is Large ribosomal subunit protein uL4, found in Cyanothece sp. (strain PCC 7425 / ATCC 29141).